Here is a 396-residue protein sequence, read N- to C-terminus: Dimethyladenosine transferase 2, mitochondrial (396 aa).

Residues 1 to 19 (MWIPVVGLPRRLRLSALAG) constitute a mitochondrion transit peptide. The disordered stretch occupies residues 44 to 64 (LSDSSPQLWPEPDFRNPPRKA). Residues Val-75, Glu-124, and Asp-150 each coordinate S-adenosyl-L-methionine. A DNA-binding region spans residues 330–331 (RR).

This sequence belongs to the class I-like SAM-binding methyltransferase superfamily. rRNA adenine N(6)-methyltransferase family. KsgA subfamily. In terms of assembly, homodimer. Component of the mitochondrial transcription initiation complex, composed at least of TFB2M, TFAM and POLRMT. In this complex TFAM recruits POLRMT to the promoter whereas TFB2M induces structural changes in POLRMT to enable promoter opening and trapping of the DNA non-template strand. Interacts with mitochondrial RNA polymerase POLRMT. Interacts with TFAM. Ubiquitously expressed.

The protein resides in the mitochondrion. It catalyses the reaction adenosine in rRNA + S-adenosyl-L-methionine = N(6)-methyladenosine in rRNA + S-adenosyl-L-homocysteine + H(+). In terms of biological role, S-adenosyl-L-methionine-dependent rRNA methyltransferase which may methylate two specific adjacent adenosines in the loop of a conserved hairpin near the 3'-end of 12S mitochondrial rRNA. Component of the mitochondrial transcription initiation complex, composed at least of TFB2M, TFAM and POLRMT that is required for basal transcription of mitochondrial DNA. In this complex, TFAM recruits POLRMT to a specific promoter whereas TFB2M induces structural changes in POLRMT to enable promoter opening and trapping of the DNA non-template strand. Stimulates transcription independently of the methyltransferase activity. This chain is Dimethyladenosine transferase 2, mitochondrial, found in Homo sapiens (Human).